The following is a 440-amino-acid chain: Xylose isomerase (440 aa).

Catalysis depends on residues H100 and D103. E231, E267, H270, D295, D306, D308, and D338 together coordinate Mg(2+).

The protein belongs to the xylose isomerase family. Homotetramer. Mg(2+) is required as a cofactor.

The protein resides in the cytoplasm. The catalysed reaction is alpha-D-xylose = alpha-D-xylulofuranose. The polypeptide is Xylose isomerase (Burkholderia cenocepacia (strain ATCC BAA-245 / DSM 16553 / LMG 16656 / NCTC 13227 / J2315 / CF5610) (Burkholderia cepacia (strain J2315))).